The chain runs to 201 residues: Probable quinol oxidase subunit 3 (201 aa).

5 helical membrane passes run 20–40 (LGFW…FATL), 62–82 (LVLI…IAIY), 91–111 (LMMF…GFEI), 133–153 (FFIL…WAIC), and 172–192 (FIVS…FTAV).

The protein belongs to the cytochrome c oxidase subunit 3 family.

It localises to the cell membrane. The catalysed reaction is 2 a quinol + O2 = 2 a quinone + 2 H2O. In terms of biological role, catalyzes quinol oxidation with the concomitant reduction of oxygen to water. This chain is Probable quinol oxidase subunit 3 (qoxC), found in Staphylococcus aureus (strain MSSA476).